The primary structure comprises 182 residues: Fatty-acid and retinol-binding protein 2 (182 aa).

Residues 1 to 17 (MIRAFLVVALASVAVFS) form the signal peptide. Coiled-coil stretches lie at residues 46-73 (LKAI…EEEF) and 131-152 (TLDS…LSDD).

This sequence belongs to the fatty-acid and retinol-binding protein (FARBP) family.

The protein resides in the secreted. Its function is as follows. Probably binds lipids. In Caenorhabditis elegans, this protein is Fatty-acid and retinol-binding protein 2 (far-2).